The primary structure comprises 120 residues: Ribosome-binding factor A (120 aa).

Belongs to the RbfA family. Monomer. Binds 30S ribosomal subunits, but not 50S ribosomal subunits or 70S ribosomes.

It localises to the cytoplasm. Its function is as follows. One of several proteins that assist in the late maturation steps of the functional core of the 30S ribosomal subunit. Associates with free 30S ribosomal subunits (but not with 30S subunits that are part of 70S ribosomes or polysomes). Required for efficient processing of 16S rRNA. May interact with the 5'-terminal helix region of 16S rRNA. This chain is Ribosome-binding factor A, found in Fusobacterium nucleatum subsp. nucleatum (strain ATCC 25586 / DSM 15643 / BCRC 10681 / CIP 101130 / JCM 8532 / KCTC 2640 / LMG 13131 / VPI 4355).